Consider the following 70-residue polypeptide: Conotoxin Cl9.1 (70 aa).

A signal peptide spans 1–20 (MMGKLGVVLFICLVLFPLET). Residues 21 to 50 (LQLEGGQQADRHVDQLEGNPNRETRTIEVR) constitute a propeptide that is removed on maturation. Cystine bridges form between cysteine 51-cysteine 63, cysteine 56-cysteine 67, and cysteine 61-cysteine 70.

The protein belongs to the conotoxin M superfamily. Expressed by the venom duct.

The protein resides in the secreted. The protein is Conotoxin Cl9.1 of Californiconus californicus (California cone).